Reading from the N-terminus, the 257-residue chain is Glucosamine-6-phosphate deaminase (257 aa).

Aspartate 64 acts as the Proton acceptor; for enolization step in catalysis. The active-site For ring-opening step is the asparagine 133. The active-site Proton acceptor; for ring-opening step is the histidine 135. Glutamate 140 serves as the catalytic For ring-opening step.

It belongs to the glucosamine/galactosamine-6-phosphate isomerase family. NagB subfamily.

The enzyme catalyses alpha-D-glucosamine 6-phosphate + H2O = beta-D-fructose 6-phosphate + NH4(+). It participates in amino-sugar metabolism; N-acetylneuraminate degradation; D-fructose 6-phosphate from N-acetylneuraminate: step 5/5. Functionally, catalyzes the reversible isomerization-deamination of glucosamine 6-phosphate (GlcN6P) to form fructose 6-phosphate (Fru6P) and ammonium ion. The sequence is that of Glucosamine-6-phosphate deaminase from Corynebacterium urealyticum (strain ATCC 43042 / DSM 7109).